A 421-amino-acid polypeptide reads, in one-letter code: Glutamate-1-semialdehyde 2,1-aminomutase 1 (421 aa).

An N6-(pyridoxal phosphate)lysine modification is found at Lys258.

The protein belongs to the class-III pyridoxal-phosphate-dependent aminotransferase family. HemL subfamily. Pyridoxal 5'-phosphate serves as cofactor.

The protein resides in the cytoplasm. It carries out the reaction (S)-4-amino-5-oxopentanoate = 5-aminolevulinate. It functions in the pathway porphyrin-containing compound metabolism; protoporphyrin-IX biosynthesis; 5-aminolevulinate from L-glutamyl-tRNA(Glu): step 2/2. In Cenarchaeum symbiosum (strain A), this protein is Glutamate-1-semialdehyde 2,1-aminomutase 1.